Reading from the N-terminus, the 220-residue chain is uncharacterized protein (220 aa).

This is an uncharacterized protein from Mycoplasma pneumoniae (strain ATCC 29342 / M129 / Subtype 1) (Mycoplasmoides pneumoniae).